The primary structure comprises 151 residues: Large ribosomal subunit protein uL15 (151 aa).

Positions 37–57 (GMRGQKSRSGRPTRPGFEGGQ) are disordered.

The protein belongs to the universal ribosomal protein uL15 family. Part of the 50S ribosomal subunit.

In terms of biological role, binds to the 23S rRNA. This Prochlorococcus marinus (strain MIT 9313) protein is Large ribosomal subunit protein uL15.